Reading from the N-terminus, the 235-residue chain is Phosphoglycolate phosphatase (235 aa).

D14 serves as the catalytic Nucleophile. 3 residues coordinate Mg(2+): D14, D16, and D177.

The protein belongs to the HAD-like hydrolase superfamily. CbbY/CbbZ/Gph/YieH family. The cofactor is Mg(2+).

The catalysed reaction is 2-phosphoglycolate + H2O = glycolate + phosphate. It functions in the pathway organic acid metabolism; glycolate biosynthesis; glycolate from 2-phosphoglycolate: step 1/1. In terms of biological role, specifically catalyzes the dephosphorylation of 2-phosphoglycolate. Is involved in the dissimilation of the intracellular 2-phosphoglycolate formed during the DNA repair of 3'-phosphoglycolate ends, a major class of DNA lesions induced by oxidative stress. The protein is Phosphoglycolate phosphatase of Neisseria meningitidis serogroup A / serotype 4A (strain DSM 15465 / Z2491).